A 339-amino-acid chain; its full sequence is DNA-directed RNA polymerase subunit alpha (339 aa).

The alpha N-terminal domain (alpha-NTD) stretch occupies residues 1 to 233 (MVREEVAGST…DLFLPFLHAE (233 aa)). Positions 264–339 (KKGIPLNYIF…IDLLKNKLSF (76 aa)) are alpha C-terminal domain (alpha-CTD).

This sequence belongs to the RNA polymerase alpha chain family. As to quaternary structure, in plastids the minimal PEP RNA polymerase catalytic core is composed of four subunits: alpha, beta, beta', and beta''. When a (nuclear-encoded) sigma factor is associated with the core the holoenzyme is formed, which can initiate transcription.

It is found in the plastid. It localises to the chloroplast. It catalyses the reaction RNA(n) + a ribonucleoside 5'-triphosphate = RNA(n+1) + diphosphate. Functionally, DNA-dependent RNA polymerase catalyzes the transcription of DNA into RNA using the four ribonucleoside triphosphates as substrates. The protein is DNA-directed RNA polymerase subunit alpha of Psathyrostachys rupestris (Hordeum rupestre).